Reading from the N-terminus, the 251-residue chain is Pyridoxine 5'-phosphate synthase (251 aa).

Asn-7 serves as a coordination point for 3-amino-2-oxopropyl phosphate. Residue 9 to 10 participates in 1-deoxy-D-xylulose 5-phosphate binding; sequence DH. A 3-amino-2-oxopropyl phosphate-binding site is contributed by Arg-18. The active-site Proton acceptor is His-43. 1-deoxy-D-xylulose 5-phosphate-binding residues include Arg-45 and His-50. The Proton acceptor role is filled by Glu-70. A 1-deoxy-D-xylulose 5-phosphate-binding site is contributed by Thr-100. His-198 serves as the catalytic Proton donor. 3-amino-2-oxopropyl phosphate-binding positions include Ala-199 and 220-221; that span reads GH.

Belongs to the PNP synthase family. In terms of assembly, homooctamer; tetramer of dimers.

Its subcellular location is the cytoplasm. It carries out the reaction 3-amino-2-oxopropyl phosphate + 1-deoxy-D-xylulose 5-phosphate = pyridoxine 5'-phosphate + phosphate + 2 H2O + H(+). It functions in the pathway cofactor biosynthesis; pyridoxine 5'-phosphate biosynthesis; pyridoxine 5'-phosphate from D-erythrose 4-phosphate: step 5/5. In terms of biological role, catalyzes the complicated ring closure reaction between the two acyclic compounds 1-deoxy-D-xylulose-5-phosphate (DXP) and 3-amino-2-oxopropyl phosphate (1-amino-acetone-3-phosphate or AAP) to form pyridoxine 5'-phosphate (PNP) and inorganic phosphate. The sequence is that of Pyridoxine 5'-phosphate synthase from Dechloromonas aromatica (strain RCB).